A 116-amino-acid polypeptide reads, in one-letter code: NADH-ubiquinone oxidoreductase chain 3 (116 aa).

3 helical membrane-spanning segments follow: residues 3–23, 56–76, and 87–107; these read LITT…TISF, FFLI…LLPL, and LTLI…IYEW.

Belongs to the complex I subunit 3 family.

It is found in the mitochondrion membrane. It catalyses the reaction a ubiquinone + NADH + 5 H(+)(in) = a ubiquinol + NAD(+) + 4 H(+)(out). In terms of biological role, core subunit of the mitochondrial membrane respiratory chain NADH dehydrogenase (Complex I) that is believed to belong to the minimal assembly required for catalysis. Complex I functions in the transfer of electrons from NADH to the respiratory chain. The immediate electron acceptor for the enzyme is believed to be ubiquinone. The polypeptide is NADH-ubiquinone oxidoreductase chain 3 (MT-ND3) (Oncorhynchus gorbuscha (Pink salmon)).